A 79-amino-acid chain; its full sequence is Cytochrome b (79 aa).

3 helical membrane-spanning segments follow: residues 1 to 7 (TALLLAM), 31 to 52 (WLIR…YLHI), and 67 to 79 (WNIG…TLMA). Heme b-binding residues include histidine 37 and histidine 51.

Belongs to the cytochrome b family. In terms of assembly, the cytochrome bc1 complex contains 11 subunits: 3 respiratory subunits (MT-CYB, CYC1 and UQCRFS1), 2 core proteins (UQCRC1 and UQCRC2) and 6 low-molecular weight proteins (UQCRH/QCR6, UQCRB/QCR7, UQCRQ/QCR8, UQCR10/QCR9, UQCR11/QCR10 and a cleavage product of UQCRFS1). This cytochrome bc1 complex then forms a dimer. Heme b serves as cofactor.

It is found in the mitochondrion inner membrane. Its function is as follows. Component of the ubiquinol-cytochrome c reductase complex (complex III or cytochrome b-c1 complex) that is part of the mitochondrial respiratory chain. The b-c1 complex mediates electron transfer from ubiquinol to cytochrome c. Contributes to the generation of a proton gradient across the mitochondrial membrane that is then used for ATP synthesis. This Corcorax melanoramphos (White-winged chough) protein is Cytochrome b (MT-CYB).